The following is a 420-amino-acid chain: Gamma-glutamyl phosphate reductase (420 aa).

It belongs to the gamma-glutamyl phosphate reductase family.

The protein localises to the cytoplasm. It carries out the reaction L-glutamate 5-semialdehyde + phosphate + NADP(+) = L-glutamyl 5-phosphate + NADPH + H(+). The protein operates within amino-acid biosynthesis; L-proline biosynthesis; L-glutamate 5-semialdehyde from L-glutamate: step 2/2. Functionally, catalyzes the NADPH-dependent reduction of L-glutamate 5-phosphate into L-glutamate 5-semialdehyde and phosphate. The product spontaneously undergoes cyclization to form 1-pyrroline-5-carboxylate. The polypeptide is Gamma-glutamyl phosphate reductase (Chlorobium luteolum (strain DSM 273 / BCRC 81028 / 2530) (Pelodictyon luteolum)).